Consider the following 78-residue polypeptide: uncharacterized protein (78 aa).

Residues 1-28 (MGGGNAQKSAMARAKNLEKAKAAGKGSQ) are disordered.

This is an uncharacterized protein from Arabidopsis thaliana (Mouse-ear cress).